A 341-amino-acid polypeptide reads, in one-letter code: Methionine import ATP-binding protein MetN 2 (341 aa).

The ABC transporter domain occupies 2–241 (IELKEVVKEY…PQHTVTKRFV (240 aa)). 38 to 45 (GFSGAGKS) is a binding site for ATP.

Belongs to the ABC transporter superfamily. Methionine importer (TC 3.A.1.24) family. The complex is composed of two ATP-binding proteins (MetN), two transmembrane proteins (MetI) and a solute-binding protein (MetQ).

The protein localises to the cell membrane. It carries out the reaction L-methionine(out) + ATP + H2O = L-methionine(in) + ADP + phosphate + H(+). It catalyses the reaction D-methionine(out) + ATP + H2O = D-methionine(in) + ADP + phosphate + H(+). Part of the ABC transporter complex MetNIQ involved in methionine import. Responsible for energy coupling to the transport system. This is Methionine import ATP-binding protein MetN 2 from Staphylococcus aureus (strain USA300).